The chain runs to 94 residues: Small ribosomal subunit protein uS17 (94 aa).

It belongs to the universal ribosomal protein uS17 family. As to quaternary structure, part of the 30S ribosomal subunit.

One of the primary rRNA binding proteins, it binds specifically to the 5'-end of 16S ribosomal RNA. This is Small ribosomal subunit protein uS17 from Streptomyces avermitilis (strain ATCC 31267 / DSM 46492 / JCM 5070 / NBRC 14893 / NCIMB 12804 / NRRL 8165 / MA-4680).